Consider the following 90-residue polypeptide: Small ribosomal subunit protein bS18B (90 aa).

Belongs to the bacterial ribosomal protein bS18 family. As to quaternary structure, part of the 30S ribosomal subunit. Forms a tight heterodimer with protein bS6.

In terms of biological role, binds as a heterodimer with protein bS6 to the central domain of the 16S rRNA, where it helps stabilize the platform of the 30S subunit. The protein is Small ribosomal subunit protein bS18B of Roseiflexus sp. (strain RS-1).